The primary structure comprises 578 residues: Probable lysosomal cobalamin transporter (578 aa).

2 consecutive transmembrane segments (helical) span residues 8-28 (LIWVVYAIAIAVLIAVASVFI) and 46-66 (IFAITTLLATVLLLPVDVALV). N-linked (GlcNAc...) asparagine glycosylation occurs at asparagine 70. Helical transmembrane passes span 95–115 (VVYYLLYSLDALLCLLVIPFT) and 145–165 (TITFIAIVIVLFLVGFFVPVA). N-linked (GlcNAc...) asparagine glycosylation is present at asparagine 168. Transmembrane regions (helical) follow at residues 188 to 208 (ALTFALGLLITIGLCLYVLYT), 312 to 332 (LLGGIILLIIALVIWVSMLLT), 347 to 367 (GYILGHITVFNPINWVFVQAA), 375 to 395 (VIFTLLVLLFFCSSVVGIAIV), 419 to 439 (LTTAMLMLTILALNYSVSMVV), and 506 to 526 (FFGVIFFWGQFVFLGVYLIVV). The interval 539–578 (RQMDEDAEEAEEEGLLASTGRRLDTAWQDITGRSNRQRDS) is disordered. Over residues 540–552 (QMDEDAEEAEEEG) the composition is skewed to acidic residues.

It belongs to the LIMR family. LMBRD1 subfamily.

It localises to the lysosome membrane. Functionally, probable lysosomal cobalamin transporter. Required to export cobalamin from lysosomes allowing its conversion to cofactors. In Aspergillus terreus (strain NIH 2624 / FGSC A1156), this protein is Probable lysosomal cobalamin transporter.